We begin with the raw amino-acid sequence, 459 residues long: Peptidyl-prolyl cis-trans isomerase FKBP4 (459 aa).

Met-1 is subject to N-acetylmethionine; in peptidyl-prolyl cis-trans isomerase FKBP4; alternate. The tract at residues 1-22 (MTAEETKAAESGAQSAPLRLEG) is disordered. At Thr-2 the chain carries N-acetylthreonine; in peptidyl-prolyl cis-trans isomerase FKBP4, N-terminally processed; partial. The 89-residue stretch at 50–138 (GDRVFVHYTG…VFEVELFEFK (89 aa)) folds into the PPIase FKBP-type 1 domain. Thr-143 bears the Phosphothreonine mark. The PPIase FKBP-type 2 domain maps to 167-253 (GALVEVALEG…KYEIHLKSFE (87 aa)). Tyr-220 is modified (phosphotyrosine). The tract at residues 267 to 400 (LEQSTIVKER…AQLVVCQQRI (134 aa)) is interaction with tubulin. TPR repeat units lie at residues 270-303 (STIV…LEYE), 319-352 (LASH…DSNN), and 354-386 (KGLF…YPSN). Lys-282 bears the N6-acetyllysine mark. The residue at position 373 (Arg-373) is an Omega-N-methylarginine. The tract at residues 423 to 459 (TKAKATVAAGDQPADAEMRDEPKNDVAGGQPQVEAEA) is disordered.

In terms of assembly, homodimer. Interacts with GLMN. Associates with HSP90AA1 and HSP70 in steroid hormone receptor complexes. Also interacts with peroxisomal phytanoyl-CoA alpha-hydroxylase (PHYH). Interacts with NR3C1 and dynein. Interacts with HSF1 in the HSP90 complex. Associates with tubulin. Interacts with MAPT/TAU. Interacts (via TPR domain) with S100A1, S100A2 and S100A6; the interaction is Ca(2+) dependent. Interaction with S100A1 and S100A2 (but not with S100A6) leads to inhibition of FKBP4-HSP90 interaction. Interacts with dynein; causes partially NR3C1 transport to the nucleus.

The protein resides in the cytoplasm. It is found in the cytosol. The protein localises to the mitochondrion. It localises to the nucleus. Its subcellular location is the cytoskeleton. It catalyses the reaction [protein]-peptidylproline (omega=180) = [protein]-peptidylproline (omega=0). Its activity is regulated as follows. Inhibited by FK506. Immunophilin protein with PPIase and co-chaperone activities. Component of unligated steroid receptors heterocomplexes through interaction with heat-shock protein 90 (HSP90). May play a role in the intracellular trafficking of heterooligomeric forms of steroid hormone receptors between cytoplasm and nuclear compartments. The isomerase activity controls neuronal growth cones via regulation of TRPC1 channel opening. Also acts as a regulator of microtubule dynamics by inhibiting MAPT/TAU ability to promote microtubule assembly. May have a protective role against oxidative stress in mitochondria. In Bos taurus (Bovine), this protein is Peptidyl-prolyl cis-trans isomerase FKBP4 (FKBP4).